The sequence spans 380 residues: MSSLAADQRADGRIDFVGSVRPTVGVEWEFALVDATTRDLSNEAASVIAEIGENPRVHKELLRNTVEVVTGICANAGEAMEDLASTLRPVREVVRERGMDLFCAGTHPFADWSVQKLTDAPRYAELIKRTQWWGRQMLIWGVHVHVGVSSAHKVMPIITALLHQYPHLLALSASSPYWDGEDTGYASNRAMMFQQLPTAGLPFHFQEWREFERFVSDQKKTGIIDHMNEIRWDIRPSPHLGTIEVRIFDGVSNLHELSALVALTHCLIVDLDRRLDAGESLPVMPPWHVQENKWRAARYGLDAIIILDADSNERLVTEDLDDLLERLQPVAKRLSCVEELSRVPDIYHNGASYQRQRRVAEEHDGDLRAVVDALVSELVL.

The protein belongs to the glutamate--cysteine ligase type 2 family. YbdK subfamily.

It carries out the reaction L-cysteine + L-glutamate + ATP = gamma-L-glutamyl-L-cysteine + ADP + phosphate + H(+). Its function is as follows. ATP-dependent carboxylate-amine ligase which exhibits weak glutamate--cysteine ligase activity. The polypeptide is Putative glutamate--cysteine ligase 2-1 (Mycolicibacterium vanbaalenii (strain DSM 7251 / JCM 13017 / BCRC 16820 / KCTC 9966 / NRRL B-24157 / PYR-1) (Mycobacterium vanbaalenii)).